Consider the following 311-residue polypeptide: MEEIRVSPDYNWFRSTVPLKRIIVDDDDSKVWSLYDAGPKSIRCPIIFLPPVSGTAEVFFQQVLALSGWGYRVISLQYPVYWDLLEFCDGFRKLLDHLQLDKVHLFGASLGGFLAQKFAEVTYKSPRVHSLVLCNSFSDTSIFNQTWTANSFWLMPSFMLKKIVLGNFAKGPVDPKMADAIDFMVDRLESLNQSELASRLTLNCQNSYVEPHKIKDIAVTIMDVFDQSALSQEAKEEMYKLYPNARRAHLKTGGNFPYLCRSAEVNLYIQIHLRQFHGTRYAAISPEMVSAEELEVQRTHLSNNSESEDES.

In terms of domain architecture, AB hydrolase-1 spans 86–159; that stretch reads EFCDGFRKLL…NSFWLMPSFM (74 aa).

The protein belongs to the AB hydrolase superfamily.

It localises to the cytoplasm. The protein is Maspardin (spg21) of Danio rerio (Zebrafish).